The primary structure comprises 342 residues: Tetraacyldisaccharide 4'-kinase (342 aa).

An ATP-binding site is contributed by 68–75 (TVGGTGKT).

It belongs to the LpxK family.

The catalysed reaction is a lipid A disaccharide + ATP = a lipid IVA + ADP + H(+). The protein operates within glycolipid biosynthesis; lipid IV(A) biosynthesis; lipid IV(A) from (3R)-3-hydroxytetradecanoyl-[acyl-carrier-protein] and UDP-N-acetyl-alpha-D-glucosamine: step 6/6. Transfers the gamma-phosphate of ATP to the 4'-position of a tetraacyldisaccharide 1-phosphate intermediate (termed DS-1-P) to form tetraacyldisaccharide 1,4'-bis-phosphate (lipid IVA). The protein is Tetraacyldisaccharide 4'-kinase of Burkholderia ambifaria (strain MC40-6).